The chain runs to 657 residues: Translation factor GUF1, mitochondrial (657 aa).

Residues 1–39 (MRGCLQSVKWLTSALRPSQSLASSTRYPRRLLSTSAPRN) constitute a mitochondrion transit peptide. The 181-residue stretch at 59–239 (ERFRNFCIVA…TVIEQIPAPV (181 aa)) folds into the tr-type G domain. GTP-binding positions include 109–116 (TVKAQTCS), 173–177 (LAFAE), and 227–230 (LLPT).

This sequence belongs to the TRAFAC class translation factor GTPase superfamily. Classic translation factor GTPase family. LepA subfamily.

Its subcellular location is the mitochondrion inner membrane. The catalysed reaction is GTP + H2O = GDP + phosphate + H(+). Functionally, promotes mitochondrial protein synthesis. May act as a fidelity factor of the translation reaction, by catalyzing a one-codon backward translocation of tRNAs on improperly translocated ribosomes. Binds to mitochondrial ribosomes in a GTP-dependent manner. This is Translation factor GUF1, mitochondrial from Ajellomyces capsulatus (strain NAm1 / WU24) (Darling's disease fungus).